Here is a 104-residue protein sequence, read N- to C-terminus: MQPNDITFFQRFQNDILAGRKTITIRDVSESHFKAGDVLRVGRFEDDGYFCTIEVTGTSTVTLDTLNEKHAQQENMSLDELKRVIAEIYPNQTQFYVIDFKCLR.

The ASCH domain maps to 6–94 (ITFFQRFQND…IAEIYPNQTQ (89 aa)). Lysine 21 acts as the Proton acceptor in catalysis. Threonine 24 (nucleophile) is an active-site residue. Glutamate 74 serves as the catalytic Proton donor.

This sequence belongs to the N(4)-acetylcytidine amidohydrolase family.

It catalyses the reaction N(4)-acetylcytidine + H2O = cytidine + acetate + H(+). The enzyme catalyses N(4)-acetyl-2'-deoxycytidine + H2O = 2'-deoxycytidine + acetate + H(+). It carries out the reaction N(4)-acetylcytosine + H2O = cytosine + acetate + H(+). Catalyzes the hydrolysis of N(4)-acetylcytidine (ac4C). In Salmonella dublin (strain CT_02021853), this protein is N(4)-acetylcytidine amidohydrolase (yqfB).